We begin with the raw amino-acid sequence, 231 residues long: Urease accessory protein UreE (231 aa).

Residues 185–231 form a disordered region; that stretch reads VASPLDEPHGSGLHIHGIHSHEEGHSHGDHDHDHSHSHGDHDHDHKH. Residues 203–231 show a composition bias toward basic and acidic residues; the sequence is HSHEEGHSHGDHDHDHSHSHGDHDHDHKH.

Belongs to the UreE family.

Its subcellular location is the cytoplasm. Involved in urease metallocenter assembly. Binds nickel. Probably functions as a nickel donor during metallocenter assembly. In Yersinia pestis bv. Antiqua (strain Antiqua), this protein is Urease accessory protein UreE.